We begin with the raw amino-acid sequence, 588 residues long: Phenol 2-monooxygenase fsqG (588 aa).

FAD is bound by residues 9 to 38, 17 to 18, 37 to 39, 45 to 50, Tyr232, 289 to 299, Asp299, and 309 to 313; these read DVLI…LIDW, PA, DWK, TGRADG, ARHNRIFLAGD, and GQGMN. 2 residues coordinate substrate: Asp49 and Tyr232.

It belongs to the PheA/TfdB FAD monooxygenase family. In terms of assembly, homodimer. FAD is required as a cofactor.

It functions in the pathway secondary metabolite biosynthesis. Phenol 2-monooxygenase; part of the gene cluster that mediates the biosynthesis of the isoquinoline alkaloids fumisoquin A, fumisoquin B and fumisoquin C; as well as small amounts of fumipyrrole as a shunt metabolite. The products of the cluster lead to a brown coloration and are important for growth and conidiation. The nonribosomal peptide synthetase-like protein fsqF, which lacks a canonical condensation domain, is required for addition of a serine-derived dehydroalanine moiety to activated tyrosine but is not essential for the subsequent steps leading to isoquinoline formation. A different enzyme, most likely the ATP-grasp enzyme fsqD, is responsible for activation of tyrosine. Three additional enzymes encoded by the fsq cluster, the N-methyltransferase fsqC, the phenol 2-monooxygenase fsqG and the FAD-dependent oxidase fsqB, catalyze the formation of the isoquinoline ring system in the fumisoquins. FsqB converts the fspF thiolation domain-bound (2S,4S,5S)-2-amino-6-(3,4-dihydroxyphenyl)-4-hydroxy-5-(methylamino)hexanoyl into isoquinoline. The cyclization most likely proceeds via a two-step mechanism, beginning with FAD-dependent oxidation of the methyl group to an iminium species followed by electrophilic attack on the deprotonated phenol. The sequence is that of Phenol 2-monooxygenase fsqG from Aspergillus fumigatus (strain ATCC MYA-4609 / CBS 101355 / FGSC A1100 / Af293) (Neosartorya fumigata).